Consider the following 229-residue polypeptide: Uracil-DNA glycosylase (229 aa).

Residue aspartate 64 is the Proton acceptor of the active site.

Belongs to the uracil-DNA glycosylase (UDG) superfamily. UNG family.

It is found in the cytoplasm. The catalysed reaction is Hydrolyzes single-stranded DNA or mismatched double-stranded DNA and polynucleotides, releasing free uracil.. Excises uracil residues from the DNA which can arise as a result of misincorporation of dUMP residues by DNA polymerase or due to deamination of cytosine. This Escherichia coli O7:K1 (strain IAI39 / ExPEC) protein is Uracil-DNA glycosylase.